The chain runs to 128 residues: Hemoglobin subunit beta-1 (128 aa).

In terms of domain architecture, Globin spans His-2–His-128. Residues His-51 and His-74 each contribute to the heme b site.

The protein belongs to the globin family. As to quaternary structure, hb 1 is a heterotetramer of two alpha and two beta-1 chains. As to expression, red blood cells (at protein level).

In terms of biological role, involved in oxygen transport from gills to the various peripheral tissues. This is Hemoglobin subunit beta-1 from Somniosus microcephalus (Greenland sleeper shark).